The following is a 1352-amino-acid chain: Patatin-like phospholipase domain-containing protein 7 (1352 aa).

Topologically, residues 1–36 are lumenal; that stretch reads MQNEEDACLEAGYCLGTTLSSWRLHFMEEQSQSTML. A helical transmembrane segment spans residues 37 to 57; the sequence is MGIGIGALLTLAFVGITFFFV. The Cytoplasmic portion of the chain corresponds to 58–1352; it reads YRRVRRLRRA…DQGPRLEHPS (1295 aa). 170-297 provides a ligand contact to a nucleoside 3',5'-cyclic phosphate; that stretch reads VLGHFEKPLF…VRVVQIIMVR (128 aa). The tract at residues 340–364 is disordered; the sequence is MSYGPEEQLERSLRPSEFSSSDHGS. Phosphoserine is present on residues Ser-341 and Ser-379. The interval 384–411 is disordered; that stretch reads SNHGEVDELRQSQGSGSNTSAFQESHEG. Residues 394–406 are compositionally biased toward polar residues; the sequence is QSQGSGSNTSAFQ. A nucleoside 3',5'-cyclic phosphate is bound by residues 499–585 and 613–718; these read FLHV…YEIM and ALDW…LGEK. The segment at 681–967 is involved in the binding to lipid droplets; sequence VHAVRDSELA…RGCAQVGILR (287 aa). Residues 950-1116 form the PNPLA domain; that stretch reads LVLGGGGARG…INNLPADVAR (167 aa). The GXGXXG motif lies at 954-959; sequence GGGARG. The GXSXG motif lies at 981 to 985; it reads GTSIG. Catalysis depends on Ser-983, which acts as the Nucleophile. The Proton acceptor role is filled by Asp-1103. The short motif at 1103 to 1105 is the DGA/G element; it reads DGG. At Ser-1280 the chain carries Phosphoserine. Thr-1284 is subject to Phosphothreonine. A disordered region spans residues 1295–1352; it reads KETYADFQSTGIELDSDSEYEPSMLQGPPSLTSPEQSQDSFPWLPNQDDQGPRLEHPS. Over residues 1323–1334 the composition is skewed to polar residues; the sequence is PSLTSPEQSQDS.

Belongs to the NTE family. In terms of tissue distribution, expressed in white and brown adipose tissue, cardiac muscle, skeletal muscle, and testis. As to expression, expressed in white adipose tissue, cardiac muscle, skeletal muscle, and testis.

The protein resides in the endoplasmic reticulum membrane. The protein localises to the lipid droplet. The enzyme catalyses a 1-acyl-sn-glycero-3-phosphocholine + H2O = sn-glycerol 3-phosphocholine + a fatty acid + H(+). It carries out the reaction 1-(9Z-octadecenoyl)-sn-glycero-3-phosphocholine + H2O = sn-glycerol 3-phosphocholine + (9Z)-octadecenoate + H(+). It catalyses the reaction 1-(9Z-octadecenoyl)-sn-glycero-3-phosphoethanolamine + H2O = sn-glycero-3-phosphoethanolamine + (9Z)-octadecenoate + H(+). The catalysed reaction is 1-(9Z-octadecenoyl)-sn-glycero-3-phospho-L-serine + H2O = sn-glycero-3-phospho-L-serine + (9Z)-octadecenoate + H(+). The enzyme catalyses 1-hexadecanoyl-sn-glycero-3-phosphocholine + H2O = sn-glycerol 3-phosphocholine + hexadecanoate + H(+). It carries out the reaction 1-hexadecanoyl-sn-glycero-3-phosphate + H2O = sn-glycerol 3-phosphate + hexadecanoate + H(+). CAMP does not regulate lysophospholipase activity in vitro. Slightly inhibited by organophosphorus (OP) compounds such as mipafox, which is likely why mice are less sensitive to distal axonophathy induced by OPs compared to humans. Lysophospholipase which preferentially deacylates unsaturated lysophosphatidylcholine (C18:1), generating glycerophosphocholine. Can also deacylate, to a lesser extent, lysophosphatidylethanolamine (C18:1), lysophosphatidyl-L-serine (C18:1) and lysophosphatidic acid (C16:0). In terms of biological role, lysophospholipase. Its function is as follows. Lacks lysophospholipase activity. This chain is Patatin-like phospholipase domain-containing protein 7 (Pnpla7), found in Mus musculus (Mouse).